A 40-amino-acid chain; its full sequence is Photosystem II reaction center protein J (40 aa).

A helical transmembrane segment spans residues 8–28 (IPLCLIGTVAGIAVIGLVGVF).

This sequence belongs to the PsbJ family. As to quaternary structure, PSII is composed of 1 copy each of membrane proteins PsbA, PsbB, PsbC, PsbD, PsbE, PsbF, PsbH, PsbI, PsbJ, PsbK, PsbL, PsbM, PsbT, PsbX, PsbY, PsbZ, Psb30/Ycf12, at least 3 peripheral proteins of the oxygen-evolving complex and a large number of cofactors. It forms dimeric complexes.

It is found in the plastid. Its subcellular location is the chloroplast thylakoid membrane. In terms of biological role, one of the components of the core complex of photosystem II (PSII). PSII is a light-driven water:plastoquinone oxidoreductase that uses light energy to abstract electrons from H(2)O, generating O(2) and a proton gradient subsequently used for ATP formation. It consists of a core antenna complex that captures photons, and an electron transfer chain that converts photonic excitation into a charge separation. The chain is Photosystem II reaction center protein J from Triticum aestivum (Wheat).